Reading from the N-terminus, the 315-residue chain is Olfactory receptor 11A1 (315 aa).

The Extracellular segment spans residues 1–27; sequence MEIVSTGNETITEFVLLGFYDIPELHF. Asn8 carries an N-linked (GlcNAc...) asparagine glycan. A helical transmembrane segment spans residues 28-48; sequence LFFIVFTAVYVFIIIGNMLII. Over 49–56 the chain is Cytoplasmic; it reads VAVVSSQR. A helical transmembrane segment spans residues 57-77; it reads LHKPMYIFLANLSFLDILYTS. The Extracellular portion of the chain corresponds to 78-100; sequence AVMPKMLEGFLQEATISVAGCLL. The cysteines at positions 98 and 190 are disulfide-linked. Residues 101 to 121 traverse the membrane as a helical segment; that stretch reads QFFIFGSLATAECLLLAVMAY. Residues 122-140 are Cytoplasmic-facing; the sequence is DRYLAICYPLHYPLLMGPR. Residues 141–161 traverse the membrane as a helical segment; that stretch reads RYMGLVVTTWLSGFVVDGLVV. At 162–198 the chain is on the extracellular side; sequence ALVAQLRFCGPNHIDQFYCDFMLFVGLACSDPRVAQV. The helical transmembrane segment at 199-218 threads the bilayer; sequence TTLILSVFCLTIPFGLILTS. Topologically, residues 219-238 are cytoplasmic; it reads YARIVVAVLRVPAGASRRRA. A helical transmembrane segment spans residues 239–259; it reads FSTCSSHLAVVTTFYGTLMIF. At 260–272 the chain is on the extracellular side; sequence YVAPSAVHSQLLS. Residues 273–293 traverse the membrane as a helical segment; the sequence is KVFSLLYTVVTPLFNPVIYTM. At 294–315 the chain is on the cytoplasmic side; the sequence is RNKEVHQALRKILCIKQTETLD.

It belongs to the G-protein coupled receptor 1 family.

It localises to the cell membrane. Functionally, odorant receptor. The polypeptide is Olfactory receptor 11A1 (OR11A1) (Homo sapiens (Human)).